The primary structure comprises 340 residues: Serpentine receptor class alpha-18 (340 aa).

Transmembrane regions (helical) follow at residues 29-49 (FNFI…WLAI), 109-129 (VFEL…VFSL), 149-169 (FIAT…FYIV), 198-218 (VRTG…YVCV), 249-269 (ISIV…NLLI), and 285-305 (IVSF…VIYF).

The protein belongs to the nematode receptor-like protein sra family.

The protein resides in the membrane. The polypeptide is Serpentine receptor class alpha-18 (sra-18) (Caenorhabditis elegans).